Consider the following 237-residue polypeptide: MRPSKRAAQDLRPVTLERNVARYAEGSCLVKFGGTHVLCTASLEDKPPPWLRGQGRGWVTAEYAMLPRATHTRTRRESMSGKPSGRTQEIQRLIGRSLRAVTNLPALGERQITLDCDVLQADGGTRTAAITGAWVALHDCCKWMHGRSIIKEFPLREHVAAVSCGIYQGEAVLDLDYEEDSVAQTDANFVMTGGGALVEVQASAEGAVFSEDELSVLLALAKGGIAQLVNIQKLAIG.

Residues Arg-86 and 124–126 contribute to the phosphate site; that span reads GTR.

The protein belongs to the RNase PH family. Homohexameric ring arranged as a trimer of dimers.

The catalysed reaction is tRNA(n+1) + phosphate = tRNA(n) + a ribonucleoside 5'-diphosphate. Its function is as follows. Phosphorolytic 3'-5' exoribonuclease that plays an important role in tRNA 3'-end maturation. Removes nucleotide residues following the 3'-CCA terminus of tRNAs; can also add nucleotides to the ends of RNA molecules by using nucleoside diphosphates as substrates, but this may not be physiologically important. Probably plays a role in initiation of 16S rRNA degradation (leading to ribosome degradation) during starvation. This chain is Ribonuclease PH, found in Beijerinckia indica subsp. indica (strain ATCC 9039 / DSM 1715 / NCIMB 8712).